The following is a 301-amino-acid chain: Probable 2-(5''-triphosphoribosyl)-3'-dephosphocoenzyme-A synthase (301 aa).

Belongs to the CitG/MdcB family.

The enzyme catalyses 3'-dephospho-CoA + ATP = 2'-(5''-triphospho-alpha-D-ribosyl)-3'-dephospho-CoA + adenine. The chain is Probable 2-(5''-triphosphoribosyl)-3'-dephosphocoenzyme-A synthase from Pectobacterium carotovorum subsp. carotovorum (strain PC1).